We begin with the raw amino-acid sequence, 182 residues long: Peptidoglycan-recognition protein SB2 (182 aa).

A signal peptide spans 1–17 (MKLQLALVLCGLTLALG). Residues 40–165 (PVRLIIIHHT…CQTKATACPG (126 aa)) form the N-acetylmuramoyl-L-alanine amidase domain. Zn(2+) is bound at residue His-47. A disulfide bridge connects residues Cys-54 and Cys-60. Asn-149 carries N-linked (GlcNAc...) asparagine glycosylation. Residues His-155 and Cys-163 each contribute to the Zn(2+) site.

The protein belongs to the N-acetylmuramoyl-L-alanine amidase 2 family. Requires Zn(2+) as cofactor.

The protein resides in the secreted. It catalyses the reaction Hydrolyzes the link between N-acetylmuramoyl residues and L-amino acid residues in certain cell-wall glycopeptides.. In terms of biological role, N-acetylmuramyl-L-alanine amidase involved in innate immunity by degrading bacterial peptidoglycans (PGN). Probably plays a scavenger role by digesting biologically active PGN into biologically inactive fragments. Has no direct bacteriolytic activity. The polypeptide is Peptidoglycan-recognition protein SB2 (PGRP-SB2) (Drosophila simulans (Fruit fly)).